The sequence spans 259 residues: 7alpha-hydroxysteroid dehydrogenase (259 aa).

Residues Ile-18, 37-38 (DY), and Asn-90 contribute to the NAD(+) site. Glycochenodeoxycholate contacts are provided by Ser-145 and Tyr-158. NAD(+) is bound by residues Tyr-158, Lys-162, and 191–193 (ILT). Tyr-158 serves as the catalytic Proton acceptor.

It belongs to the short-chain dehydrogenases/reductases (SDR) family. In terms of assembly, homotetramer.

It carries out the reaction cholate + NAD(+) = 3alpha,12alpha-dihydroxy-7-oxo-5beta-cholanate + NADH + H(+). The catalysed reaction is chenodeoxycholate + NAD(+) = 7-oxolithocholate + NADH + H(+). The enzyme catalyses taurochenodeoxycholate + NAD(+) = 7-oxotaurolithocholate + NADH + H(+). It catalyses the reaction glycochenodeoxycholate + NAD(+) = 7-oxoglycolithocholate + NADH + H(+). It carries out the reaction taurocholate + NAD(+) = 7-oxo-taurodeoxycholate + NADH + H(+). The catalysed reaction is glycocholate + NAD(+) = 7-oxo-glycodeoxycholate + NADH + H(+). The enzyme catalyses an aromatic primary alcohol + NAD(+) = an aromatic aldehyde + NADH + H(+). It catalyses the reaction benzyl alcohol + NAD(+) = benzaldehyde + NADH + H(+). It carries out the reaction 4-cyanobenzyl alcohol + NAD(+) = 4-cyanobenzaldehyde + NADH + H(+). The catalysed reaction is 4-acetoxybenzyl alcohol + NAD(+) = 4-acetoxybenzaldehyde + NADH + H(+). The enzyme catalyses 4-(trifluoromethyl)benzyl alcohol + NAD(+) = 4-(trifluoromethyl)benzaldehyde + NADH + H(+). 7alpha-hydroxysteroid dehydrogenase involved in the metabolism of bile acids in the gut. Catalyzes the NAD(+)-dependent oxidation of the 7alpha-hydroxy group of 7alpha-hydroxysteroids, such as cholate, chenodeoxycholate, taurochenodeoxycholate, glycochenodeoxycholate, taurocholate and glycocholate, to the corresponding 7-oxosteroids. Since it is also able to catalyze the reduction of nonsteroidal carbonyl compounds such as various benzaldehyde analogs to their corresponding benzyl alcohols, this enzyme may also function in the detoxification of xenobiotics containing carbonyl groups in the large intestine. The protein is 7alpha-hydroxysteroid dehydrogenase of Bacteroides fragilis (strain ATCC 25285 / DSM 2151 / CCUG 4856 / JCM 11019 / LMG 10263 / NCTC 9343 / Onslow / VPI 2553 / EN-2).